The sequence spans 516 residues: Lipid II flippase MurJ (516 aa).

11 helical membrane passes run 93–113, 133–153, 159–179, 188–208, 233–253, 275–295, 317–337, 358–378, 390–409, 448–468, and 483–503; these read WALA…VFAV, IMFP…VLNT, LPAF…VFVA, ALAW…LPGL, VLAK…SLII, LMEF…LPSL, VTFL…TPLT, LATY…APGF, IAIG…VPLI, FFVQ…WCAI, and IALM…MLWV.

It belongs to the MurJ/MviN family.

It is found in the cell inner membrane. Its pathway is cell wall biogenesis; peptidoglycan biosynthesis. Its function is as follows. Involved in peptidoglycan biosynthesis. Transports lipid-linked peptidoglycan precursors from the inner to the outer leaflet of the cytoplasmic membrane. This is Lipid II flippase MurJ from Burkholderia cenocepacia (strain ATCC BAA-245 / DSM 16553 / LMG 16656 / NCTC 13227 / J2315 / CF5610) (Burkholderia cepacia (strain J2315)).